The following is a 450-amino-acid chain: Tubulin alpha-3 chain (450 aa).

Q11 is a GTP binding site. K40 is modified (N6-acetyllysine). 6 residues coordinate GTP: E71, G144, T145, T179, N206, and N228. Residue E71 participates in Mg(2+) binding. E254 is a catalytic residue.

This sequence belongs to the tubulin family. As to quaternary structure, dimer of alpha and beta chains. A typical microtubule is a hollow water-filled tube with an outer diameter of 25 nm and an inner diameter of 15 nM. Alpha-beta heterodimers associate head-to-tail to form protofilaments running lengthwise along the microtubule wall with the beta-tubulin subunit facing the microtubule plus end conferring a structural polarity. Microtubules usually have 13 protofilaments but different protofilament numbers can be found in some organisms and specialized cells. Mg(2+) serves as cofactor. In terms of processing, undergoes a tyrosination/detyrosination cycle, the cyclic removal and re-addition of a C-terminal tyrosine residue by the enzymes tubulin tyrosine carboxypeptidase (TTCP) and tubulin tyrosine ligase (TTL), respectively. Acetylation of alpha chains at Lys-40 stabilizes microtubules and affects affinity and processivity of microtubule motors. This modification has a role in multiple cellular functions, ranging from cell motility, cell cycle progression or cell differentiation to intracellular trafficking and signaling.

The protein localises to the cytoplasm. It localises to the cytoskeleton. The catalysed reaction is GTP + H2O = GDP + phosphate + H(+). Its function is as follows. Tubulin is the major constituent of microtubules, a cylinder consisting of laterally associated linear protofilaments composed of alpha- and beta-tubulin heterodimers. Microtubules grow by the addition of GTP-tubulin dimers to the microtubule end, where a stabilizing cap forms. Below the cap, tubulin dimers are in GDP-bound state, owing to GTPase activity of alpha-tubulin. The polypeptide is Tubulin alpha-3 chain (TUBA3) (Zea mays (Maize)).